The sequence spans 151 residues: Putative pre-16S rRNA nuclease (151 aa).

Belongs to the YqgF nuclease family.

The protein resides in the cytoplasm. Functionally, could be a nuclease involved in processing of the 5'-end of pre-16S rRNA. The protein is Putative pre-16S rRNA nuclease of Gloeothece citriformis (strain PCC 7424) (Cyanothece sp. (strain PCC 7424)).